Reading from the N-terminus, the 253-residue chain is MICOS complex subunit mic25 (253 aa).

Positions 1–89 (MGGSESTGRK…GAHKPTAAGV (89 aa)) are disordered. The N-myristoyl glycine moiety is linked to residue Gly-2. Positions 28 to 44 (RLSDEVVNRMKDSDLPS) are enriched in basic and acidic residues. The segment covering 48–64 (STSAASGTASAPAAFPS) has biased composition (low complexity). Positions 94–178 (AEEDLYRRYE…EQLSSIEKKN (85 aa)) form a coiled coil. Residues 206–248 (DPVCMNLQADILKCYSENKQERLNCSNLAKEYRKCVSAAQKNL) enclose the CHCH domain. 2 consecutive short sequence motifs (cx9C motif) follow at residues 209 to 219 (CMNLQADILKC) and 230 to 240 (CSNLAKEYRKC). 2 disulfides stabilise this stretch: Cys-209–Cys-240 and Cys-219–Cys-230.

Belongs to the MICOS complex subunit Mic19 family. Metazoan Mic25 subfamily. In terms of assembly, component of the mitochondrial contact site and cristae organizing system (MICOS) complex (also known as MINOS or MitOS complex).

The protein localises to the mitochondrion inner membrane. Its function is as follows. Component of the MICOS complex, a large protein complex of the mitochondrial inner membrane that plays crucial roles in the maintenance of crista junctions, inner membrane architecture, and formation of contact sites to the outer membrane. The polypeptide is MICOS complex subunit mic25 (chchd6) (Xenopus tropicalis (Western clawed frog)).